The sequence spans 1412 residues: Protein MODIFIER OF SNC1 1 (1412 aa).

6 disordered regions span residues 1–276, 384–437, 472–798, 827–888, 909–1144, and 1156–1412; these read MTSS…QSYP, GYGS…TQRP, QQMQ…KQKQ, NEGV…DESI, DIKV…WNDG, and AEEM…GDRN. The segment covering 56-103 has biased composition (polar residues); that stretch reads SWGSKSSLNAWGTSSLSPRTESGPGSPSHLSNRPSSGGSVTRPSTADS. The residue at position 72 (Ser-72) is a Phosphoserine. Residues 109–119 show a composition bias toward low complexity; the sequence is SSSSVAWDSNS. The span at 120–135 shows a compositional bias: polar residues; it reads RPSSASGVFPSNQPSV. Basic and acidic residues-rich tracts occupy residues 197–207 and 236–267; these read AEKDTSEKSTR and ANDR…EGQL. Residues 478–488 show a composition bias toward basic and acidic residues; the sequence is RNERREIRNDA. 4 stretches are compositionally biased toward polar residues: residues 517–531, 539–553, 565–581, and 610–639; these read KTRT…SSVV, QPRT…NKVS, SKNS…TNKN, and RIVN…TNTE. Residues 665-713 are compositionally biased toward basic and acidic residues; sequence DPKDNQRSTMRELARQRAQQRQKEEEERARDQRAKALAKLEELNRRSQI. Residues 667 to 717 adopt a coiled-coil conformation; it reads KDNQRSTMRELARQRAQQRQKEEEERARDQRAKALAKLEELNRRSQIYEEG. 3 stretches are compositionally biased toward polar residues: residues 738 to 749, 756 to 779, and 829 to 847; these read GSHSSNATNSVE, KNTT…QQDN, and GVSS…SAES. Positions 850–862 are enriched in basic residues; it reads PKRKNNRNGKKKH. A compositionally biased stretch (basic and acidic residues) spans 877–888; sequence VGKETKSGDESI. Residue Ser-883 is modified to Phosphoserine. Polar residues-rich tracts occupy residues 914-938 and 983-1003; these read GDSS…NWKS and QTTV…QTSS. Residues 1006-1023 are compositionally biased toward basic and acidic residues; it reads KRVEIERYVPKPIVKEMA. Residues 1056–1070 show a composition bias toward polar residues; that stretch reads LQPSGSTAGKSGSPS. The segment covering 1071–1084 has biased composition (basic residues); it reads KSRHGNGRQGKHGR. Over residues 1106 to 1137 the composition is skewed to polar residues; the sequence is FVTSNQPIRGTVNYHSSKQTEQIAAKDQTTCN. Basic and acidic residues-rich tracts occupy residues 1191–1202, 1222–1232, and 1242–1251; these read DPKKGNKRDFNK, KEGRVPGDHVW, and GGRESTRDKP. Polar residues-rich tracts occupy residues 1266-1286 and 1293-1307; these read GFTT…QNRS and VEQN…NTGQ. Composition is skewed to basic and acidic residues over residues 1338–1351 and 1359–1369; these read SNRD…HYEY and YDGERSREQSK. The span at 1384–1397 shows a compositional bias: low complexity; the sequence is QGQQRQGGYQQQRG. Positions 1400–1412 are enriched in gly residues; it reads GRNGGHGFTGDRN.

As to quaternary structure, interacts with TCP14 and TCP15.

In terms of biological role, involved in the regulation of the chromatin structure and DNA methylation at the SNC1 locus. Regulates the expression of SNC1 at chromatin level. The sequence is that of Protein MODIFIER OF SNC1 1 (MOS1) from Arabidopsis thaliana (Mouse-ear cress).